A 223-amino-acid polypeptide reads, in one-letter code: 2-C-methyl-D-erythritol 4-phosphate cytidylyltransferase (223 aa).

The protein belongs to the IspD/TarI cytidylyltransferase family. IspD subfamily.

It catalyses the reaction 2-C-methyl-D-erythritol 4-phosphate + CTP + H(+) = 4-CDP-2-C-methyl-D-erythritol + diphosphate. Its pathway is isoprenoid biosynthesis; isopentenyl diphosphate biosynthesis via DXP pathway; isopentenyl diphosphate from 1-deoxy-D-xylulose 5-phosphate: step 2/6. Functionally, catalyzes the formation of 4-diphosphocytidyl-2-C-methyl-D-erythritol from CTP and 2-C-methyl-D-erythritol 4-phosphate (MEP). This is 2-C-methyl-D-erythritol 4-phosphate cytidylyltransferase from Prochlorococcus marinus (strain MIT 9515).